Here is a 463-residue protein sequence, read N- to C-terminus: Glutamate--tRNA ligase 1 (463 aa).

The short motif at 10–20 (PSPTGYLHIGG) is the 'HIGH' region element. The 'KMSKS' region signature appears at 238–242 (KLSKR). Lys241 is an ATP binding site.

The protein belongs to the class-I aminoacyl-tRNA synthetase family. Glutamate--tRNA ligase type 1 subfamily. In terms of assembly, monomer.

It localises to the cytoplasm. It catalyses the reaction tRNA(Glu) + L-glutamate + ATP = L-glutamyl-tRNA(Glu) + AMP + diphosphate. Functionally, catalyzes the attachment of glutamate to tRNA(Glu) in a two-step reaction: glutamate is first activated by ATP to form Glu-AMP and then transferred to the acceptor end of tRNA(Glu). In Helicobacter pylori (strain HPAG1), this protein is Glutamate--tRNA ligase 1.